We begin with the raw amino-acid sequence, 149 residues long: UPF0310 protein msl3206 (149 aa).

Belongs to the UPF0310 family.

The sequence is that of UPF0310 protein msl3206 from Mesorhizobium japonicum (strain LMG 29417 / CECT 9101 / MAFF 303099) (Mesorhizobium loti (strain MAFF 303099)).